Consider the following 450-residue polypeptide: C4-dicarboxylate transport protein (450 aa).

Helical transmembrane passes span 10–30, 46–66, 78–98, 143–163, 190–210, 224–244, 291–311, 332–352, and 354–374; these read SLYF…HFYP, LIKM…IAGM, YALL…LIVV, IVGA…VIFG, IINM…AFTI, LMIC…GAIA, VVGL…SIYL, ITLL…TGSG, and IVLA…LALI. The interval 428 to 450 is disordered; it reads PEDDLGVAEGPTPGAAVNTTKTV.

The protein belongs to the dicarboxylate/amino acid:cation symporter (DAACS) (TC 2.A.23) family.

It is found in the cell inner membrane. Functionally, responsible for the transport of dicarboxylates such as succinate, fumarate, and malate from the periplasm across the membrane. The chain is C4-dicarboxylate transport protein from Pseudomonas syringae pv. syringae (strain B728a).